We begin with the raw amino-acid sequence, 133 residues long: Large-conductance mechanosensitive channel (133 aa).

The next 2 membrane-spanning stretches (helical) occupy residues 19–39 (IDLAVGVVIGGAFGKIVTSLV) and 79–99 (IQSVVDFIIISFSIFLFVKLI).

This sequence belongs to the MscL family. Homopentamer.

It localises to the cell membrane. In terms of biological role, channel that opens in response to stretch forces in the membrane lipid bilayer. May participate in the regulation of osmotic pressure changes within the cell. This Clostridium tetani (strain Massachusetts / E88) protein is Large-conductance mechanosensitive channel.